A 389-amino-acid polypeptide reads, in one-letter code: Probable dual-specificity RNA methyltransferase RlmN (389 aa).

Glu114 serves as the catalytic Proton acceptor. A Radical SAM core domain is found at Gln120–Asp358. An intrachain disulfide couples Cys127 to Cys363. Residues Cys134, Cys138, and Cys141 each coordinate [4Fe-4S] cluster. Residues Gly186 to Glu187, Ser218, Ser241 to His243, and Asn319 contribute to the S-adenosyl-L-methionine site. Cys363 (S-methylcysteine intermediate) is an active-site residue. The tract at residues Thr370 to Lys389 is disordered. A compositionally biased stretch (basic and acidic residues) spans Met371–Lys389.

It belongs to the radical SAM superfamily. RlmN family. [4Fe-4S] cluster is required as a cofactor.

It is found in the cytoplasm. The catalysed reaction is adenosine(2503) in 23S rRNA + 2 reduced [2Fe-2S]-[ferredoxin] + 2 S-adenosyl-L-methionine = 2-methyladenosine(2503) in 23S rRNA + 5'-deoxyadenosine + L-methionine + 2 oxidized [2Fe-2S]-[ferredoxin] + S-adenosyl-L-homocysteine. It catalyses the reaction adenosine(37) in tRNA + 2 reduced [2Fe-2S]-[ferredoxin] + 2 S-adenosyl-L-methionine = 2-methyladenosine(37) in tRNA + 5'-deoxyadenosine + L-methionine + 2 oxidized [2Fe-2S]-[ferredoxin] + S-adenosyl-L-homocysteine. Functionally, specifically methylates position 2 of adenine 2503 in 23S rRNA and position 2 of adenine 37 in tRNAs. This chain is Probable dual-specificity RNA methyltransferase RlmN, found in Streptococcus thermophilus (strain ATCC BAA-250 / LMG 18311).